The following is a 332-amino-acid chain: Divalent cation transporter CmaX (332 aa).

Over 1-277 (MQAYESGDER…MNRTMYLLGI (277 aa)) the chain is Cytoplasmic. The chain crosses the membrane as a helical span at residues 278-286 (ITGFFLPMS). The Periplasmic segment spans residues 287-307 (FVTGLLGINVGGIPGADAPHG). A helical membrane pass occupies residues 308-323 (FWLACLLIGGVATFQW). Topologically, residues 324–332 (WVFRRLRWL) are cytoplasmic.

Belongs to the CorA metal ion transporter (MIT) (TC 1.A.35) family. As to quaternary structure, homopentamer.

It is found in the cell inner membrane. It catalyses the reaction Zn(2+)(in) = Zn(2+)(out). It carries out the reaction Cd(2+)(in) = Cd(2+)(out). The catalysed reaction is Ni(2+)(in) = Ni(2+)(out). The enzyme catalyses Co(2+)(in) = Co(2+)(out). Functionally, transports divalent cations including Zn(2+), Cd(2+), Ni(2+) and Co(2+). The proton gradient has a small influence on transport suggesting that the transport is probably not proton-dependent. In Pseudomonas aeruginosa (strain ATCC 15692 / DSM 22644 / CIP 104116 / JCM 14847 / LMG 12228 / 1C / PRS 101 / PAO1), this protein is Divalent cation transporter CmaX.